Consider the following 488-residue polypeptide: 3-octaprenyl-4-hydroxybenzoate carboxy-lyase (488 aa).

Asparagine 172 is a Mn(2+) binding site. Prenylated FMN contacts are provided by residues 175 to 177 (IYR), 189 to 191 (RWL), and 194 to 195 (RG). Glutamate 238 contributes to the Mn(2+) binding site. Aspartate 287 serves as the catalytic Proton donor.

It belongs to the UbiD family. Homohexamer. Prenylated FMN is required as a cofactor. It depends on Mn(2+) as a cofactor.

It localises to the cell membrane. The enzyme catalyses a 4-hydroxy-3-(all-trans-polyprenyl)benzoate + H(+) = a 2-(all-trans-polyprenyl)phenol + CO2. It participates in cofactor biosynthesis; ubiquinone biosynthesis. In terms of biological role, catalyzes the decarboxylation of 3-octaprenyl-4-hydroxy benzoate to 2-octaprenylphenol, an intermediate step in ubiquinone biosynthesis. In Alteromonas mediterranea (strain DSM 17117 / CIP 110805 / LMG 28347 / Deep ecotype), this protein is 3-octaprenyl-4-hydroxybenzoate carboxy-lyase.